We begin with the raw amino-acid sequence, 125 residues long: Ribonuclease P protein component (125 aa).

It belongs to the RnpA family. Consists of a catalytic RNA component (M1 or rnpB) and a protein subunit.

It catalyses the reaction Endonucleolytic cleavage of RNA, removing 5'-extranucleotides from tRNA precursor.. In terms of biological role, RNaseP catalyzes the removal of the 5'-leader sequence from pre-tRNA to produce the mature 5'-terminus. It can also cleave other RNA substrates such as 4.5S RNA. The protein component plays an auxiliary but essential role in vivo by binding to the 5'-leader sequence and broadening the substrate specificity of the ribozyme. The protein is Ribonuclease P protein component of Idiomarina loihiensis (strain ATCC BAA-735 / DSM 15497 / L2-TR).